The primary structure comprises 58 residues: Small ribosomal subunit protein bS21 (58 aa).

The disordered stretch occupies residues 36-58 (EHYEKPSVKRKKKSEAARKRKFK). Positions 43–58 (VKRKKKSEAARKRKFK) are enriched in basic residues.

The protein belongs to the bacterial ribosomal protein bS21 family.

In Clostridium kluyveri (strain NBRC 12016), this protein is Small ribosomal subunit protein bS21.